An 86-amino-acid chain; its full sequence is MAEVKIFMVRGTAIFSASRFPTSQKFTKYVRALNEKQAIEYIYSQLGGKNKIKRYNIHIQEIKEVKEDEITDKTIRDLAKLDKIIM.

It belongs to the eukaryotic ribosomal protein eL20 family. In terms of assembly, part of the 50S ribosomal subunit. Binds 23S rRNA.

The sequence is that of Large ribosomal subunit protein eL20 from Sulfolobus acidocaldarius (strain ATCC 33909 / DSM 639 / JCM 8929 / NBRC 15157 / NCIMB 11770).